Reading from the N-terminus, the 415-residue chain is tRNA(Ile2) 2-agmatinylcytidine synthetase TiaS (415 aa).

It belongs to the TiaS family.

It is found in the cytoplasm. The enzyme catalyses cytidine(34) in tRNA(Ile2) + agmatine + ATP + H2O = 2-agmatinylcytidine(34) in tRNA(Ile2) + AMP + 2 phosphate + 2 H(+). Its function is as follows. ATP-dependent agmatine transferase that catalyzes the formation of 2-agmatinylcytidine (agm2C) at the wobble position (C34) of tRNA(Ile2), converting the codon specificity from AUG to AUA. This chain is tRNA(Ile2) 2-agmatinylcytidine synthetase TiaS, found in Methanocorpusculum labreanum (strain ATCC 43576 / DSM 4855 / Z).